We begin with the raw amino-acid sequence, 207 residues long: Octanoyltransferase (207 aa).

In terms of domain architecture, BPL/LPL catalytic spans 27 to 203; the sequence is ADTEDELWVV…HLETQFTPKA (177 aa). Substrate is bound by residues 66–73, 133–135, and 146–148; these read RGGQITYH, SLG, and GLA. The active-site Acyl-thioester intermediate is the cysteine 164.

This sequence belongs to the LipB family.

It localises to the cytoplasm. It catalyses the reaction octanoyl-[ACP] + L-lysyl-[protein] = N(6)-octanoyl-L-lysyl-[protein] + holo-[ACP] + H(+). It functions in the pathway protein modification; protein lipoylation via endogenous pathway; protein N(6)-(lipoyl)lysine from octanoyl-[acyl-carrier-protein]: step 1/2. Its function is as follows. Catalyzes the transfer of endogenously produced octanoic acid from octanoyl-acyl-carrier-protein onto the lipoyl domains of lipoate-dependent enzymes. Lipoyl-ACP can also act as a substrate although octanoyl-ACP is likely to be the physiological substrate. The protein is Octanoyltransferase of Neisseria meningitidis serogroup B (strain ATCC BAA-335 / MC58).